A 126-amino-acid chain; its full sequence is Large ribosomal subunit protein bL17 (126 aa).

This sequence belongs to the bacterial ribosomal protein bL17 family. In terms of assembly, part of the 50S ribosomal subunit. Contacts protein L32.

The sequence is that of Large ribosomal subunit protein bL17 from Vibrio parahaemolyticus serotype O3:K6 (strain RIMD 2210633).